The following is a 356-amino-acid chain: DNA polymerase IV (356 aa).

The region spanning 7–188 (IIHIDMDAFY…IPVTKFYGVG (182 aa)) is the UmuC domain. Mg(2+) contacts are provided by Asp11 and Asp106. Glu107 is a catalytic residue.

Belongs to the DNA polymerase type-Y family. In terms of assembly, monomer. It depends on Mg(2+) as a cofactor.

The protein localises to the cytoplasm. It carries out the reaction DNA(n) + a 2'-deoxyribonucleoside 5'-triphosphate = DNA(n+1) + diphosphate. Poorly processive, error-prone DNA polymerase involved in untargeted mutagenesis. Copies undamaged DNA at stalled replication forks, which arise in vivo from mismatched or misaligned primer ends. These misaligned primers can be extended by PolIV. Exhibits no 3'-5' exonuclease (proofreading) activity. May be involved in translesional synthesis, in conjunction with the beta clamp from PolIII. The sequence is that of DNA polymerase IV from Listeria welshimeri serovar 6b (strain ATCC 35897 / DSM 20650 / CCUG 15529 / CIP 8149 / NCTC 11857 / SLCC 5334 / V8).